A 640-amino-acid polypeptide reads, in one-letter code: Serine/threonine-protein kinase ELM1 (640 aa).

Residues 27–47 (ELDSPPITPTSQTSSFGSSFS) are disordered. Positions 35–47 (PTSQTSSFGSSFS) are enriched in low complexity. Residues 88-420 (YTLGVSAGSG…PIDSRNHSQI (333 aa)) enclose the Protein kinase domain. ATP-binding positions include 94 to 102 (AGSGQFGYV) and Lys-117. Phosphoserine is present on Ser-152. Asp-259 (proton acceptor) is an active-site residue. A phosphoserine mark is found at Ser-516 and Ser-519. The segment covering 520–529 (LPNLTVNNDK) has biased composition (polar residues). Disordered regions lie at residues 520–547 (LPNLTVNNDKQNSDMKTDRSESSSHSSL) and 562–587 (SPKENGNRTHINCSQDKPSSPLMDRT). Over residues 530-541 (QNSDMKTDRSES) the composition is skewed to basic and acidic residues. Residues 569–579 (RTHINCSQDKP) are compositionally biased toward polar residues.

It belongs to the protein kinase superfamily. Ser/Thr protein kinase family. The cofactor is Mg(2+).

The enzyme catalyses L-seryl-[protein] + ATP = O-phospho-L-seryl-[protein] + ADP + H(+). It carries out the reaction L-threonyl-[protein] + ATP = O-phospho-L-threonyl-[protein] + ADP + H(+). Important role in G1 events required for bud emergence and septin organization. Coordinates cell growth and cell division at G2/M, essential for efficient cytokinesis and for regulation of SWE1. This is Serine/threonine-protein kinase ELM1 (ELM1) from Saccharomyces cerevisiae (strain ATCC 204508 / S288c) (Baker's yeast).